A 149-amino-acid polypeptide reads, in one-letter code: Calmodulin (149 aa).

A2 is modified (N-acetylalanine). EF-hand domains are found at residues 8–43, 44–79, 81–116, and 117–149; these read EQIA…LGQN, PTEA…KMKD, DSEE…LGEK, and LTDE…MTAK. Ca(2+) contacts are provided by D21, D23, D25, T27, E32, D57, D59, N61, T63, E68, D94, D96, N98, Y100, and E105. K116 is subject to N6,N6,N6-trimethyllysine. Positions 130, 132, 134, 136, and 141 each coordinate Ca(2+).

The protein belongs to the calmodulin family.

Functionally, calmodulin acts as part of a calcium signal transduction pathway by mediating the control of a large number of enzymes, ion channels, aquaporins and other proteins through calcium-binding. Calcium-binding is required for the activation of calmodulin. Among the enzymes to be stimulated by the calmodulin-calcium complex are a number of protein kinases, such as myosin light-chain kinases and calmodulin-dependent protein kinase type II (CaMK2), and phosphatases. The sequence is that of Calmodulin (calm) from Epinephelus akaara (Hong Kong grouper).